The following is a 561-amino-acid chain: 2-methylisocitrate lyase, mitochondrial (561 aa).

Residues 154 to 177 (KAQSMHDRKQWDTRRKMSPDERSK) form a disordered region. A compositionally biased stretch (basic and acidic residues) spans 157-177 (SMHDRKQWDTRRKMSPDERSK). Cys-228 is an active-site residue.

It belongs to the isocitrate lyase/PEP mutase superfamily. Isocitrate lyase family. Requires Mg(2+) as cofactor.

The protein localises to the mitochondrion matrix. It carries out the reaction (2S,3R)-3-hydroxybutane-1,2,3-tricarboxylate = pyruvate + succinate. It participates in organic acid metabolism; propanoate degradation. In terms of biological role, component of the methylcitrate cycle that catalyzes the formation of pyruvate and succinate from 2-methylisocitrate during the metabolism of endogenous propionyl-CoA. Plays an important role for growth and development, but also in antagonism, root colonization and induction of defense responses in plants. In Hypocrea atroviridis (strain ATCC 20476 / IMI 206040) (Trichoderma atroviride), this protein is 2-methylisocitrate lyase, mitochondrial.